The sequence spans 300 residues: Energy-coupling factor transporter ATP-binding protein EcfA2 (300 aa).

Residues 3-258 (IKAKNIVKIY…NKFLIENKML (256 aa)) form the ABC transporter domain. 40–47 (GQTGSGKT) lines the ATP pocket.

Belongs to the ABC transporter superfamily. Energy-coupling factor EcfA family. In terms of assembly, forms a stable energy-coupling factor (ECF) transporter complex composed of 2 membrane-embedded substrate-binding proteins (S component), 2 ATP-binding proteins (A component) and 2 transmembrane proteins (T component).

It localises to the cell membrane. In terms of biological role, ATP-binding (A) component of a common energy-coupling factor (ECF) ABC-transporter complex. Unlike classic ABC transporters this ECF transporter provides the energy necessary to transport a number of different substrates. The protein is Energy-coupling factor transporter ATP-binding protein EcfA2 of Mesomycoplasma hyopneumoniae (strain 7448) (Mycoplasma hyopneumoniae).